Here is a 456-residue protein sequence, read N- to C-terminus: Phosphomethylpyrimidine synthase (456 aa).

Substrate contacts are provided by residues asparagine 80, methionine 109, tyrosine 139, histidine 175, 195-197 (SRG), 236-239 (DSLR), and glutamate 275. Histidine 279 serves as a coordination point for Zn(2+). Residue tyrosine 302 coordinates substrate. Histidine 343 serves as a coordination point for Zn(2+). Cysteine 423, cysteine 426, and cysteine 431 together coordinate [4Fe-4S] cluster.

The protein belongs to the ThiC family. [4Fe-4S] cluster is required as a cofactor.

The catalysed reaction is 5-amino-1-(5-phospho-beta-D-ribosyl)imidazole + S-adenosyl-L-methionine = 4-amino-2-methyl-5-(phosphooxymethyl)pyrimidine + CO + 5'-deoxyadenosine + formate + L-methionine + 3 H(+). The protein operates within cofactor biosynthesis; thiamine diphosphate biosynthesis. In terms of biological role, catalyzes the synthesis of the hydroxymethylpyrimidine phosphate (HMP-P) moiety of thiamine from aminoimidazole ribotide (AIR) in a radical S-adenosyl-L-methionine (SAM)-dependent reaction. The sequence is that of Phosphomethylpyrimidine synthase from Prochlorococcus marinus (strain MIT 9515).